The sequence spans 323 residues: Aspartate carbamoyltransferase catalytic subunit (323 aa).

Residues Arg-55 and Thr-56 each coordinate carbamoyl phosphate. Lys-83 contributes to the L-aspartate binding site. Arg-105, His-138, and Gln-141 together coordinate carbamoyl phosphate. L-aspartate is bound by residues Arg-181 and Arg-235. Gly-276 and Pro-277 together coordinate carbamoyl phosphate.

It belongs to the aspartate/ornithine carbamoyltransferase superfamily. ATCase family. As to quaternary structure, heterododecamer (2C3:3R2) of six catalytic PyrB chains organized as two trimers (C3), and six regulatory PyrI chains organized as three dimers (R2).

It catalyses the reaction carbamoyl phosphate + L-aspartate = N-carbamoyl-L-aspartate + phosphate + H(+). It participates in pyrimidine metabolism; UMP biosynthesis via de novo pathway; (S)-dihydroorotate from bicarbonate: step 2/3. Catalyzes the condensation of carbamoyl phosphate and aspartate to form carbamoyl aspartate and inorganic phosphate, the committed step in the de novo pyrimidine nucleotide biosynthesis pathway. This chain is Aspartate carbamoyltransferase catalytic subunit, found in Corynebacterium aurimucosum (strain ATCC 700975 / DSM 44827 / CIP 107346 / CN-1) (Corynebacterium nigricans).